Reading from the N-terminus, the 42-residue chain is Photosystem II reaction center protein J (42 aa).

Residues 10-30 (IPLWLVGTVVGIAALTLLSVF) traverse the membrane as a helical segment.

The protein belongs to the PsbJ family. As to quaternary structure, PSII is composed of 1 copy each of membrane proteins PsbA, PsbB, PsbC, PsbD, PsbE, PsbF, PsbH, PsbI, PsbJ, PsbK, PsbL, PsbM, PsbT, PsbX, PsbY, PsbZ, Psb30/Ycf12, at least 3 peripheral proteins of the oxygen-evolving complex and a large number of cofactors. It forms dimeric complexes.

It is found in the plastid. It localises to the chloroplast thylakoid membrane. In terms of biological role, one of the components of the core complex of photosystem II (PSII). PSII is a light-driven water:plastoquinone oxidoreductase that uses light energy to abstract electrons from H(2)O, generating O(2) and a proton gradient subsequently used for ATP formation. It consists of a core antenna complex that captures photons, and an electron transfer chain that converts photonic excitation into a charge separation. The chain is Photosystem II reaction center protein J from Tupiella akineta (Green alga).